We begin with the raw amino-acid sequence, 335 residues long: Endo-1,4-beta-xylanase S20 (335 aa).

An N-terminal signal peptide occupies residues 1–22; sequence MLRKLVTGALAAALLLSGQSNA. A GH11 domain is found at 39–241; sequence NNKNETGNGN…GSGYVDFTYA (203 aa). Asn-42 and Asn-78 each carry an N-linked (GlcNAc...) asparagine glycan. Glu-134 functions as the Nucleophile in the catalytic mechanism. Asn-202 carries N-linked (GlcNAc...) asparagine glycosylation. Glu-228 (proton donor) is an active-site residue. N-linked (GlcNAc...) asparagine glycosylation occurs at Asn-251. Positions 251-291 are disordered; the sequence is NASAPSNNNNNNNNNNDNNGNWNNWNNNNNNNNNNNNNNNN. Residues 257–291 show a composition bias toward low complexity; sequence NNNNNNNNNNDNNGNWNNWNNNNNNNNNNNNNNNN. The CBM1 domain maps to 300 to 335; that stretch reads NCAAIWGQCGGSGYNGPKCCKQGSCKQINQWYSQCQ.

The protein belongs to the glycosyl hydrolase 11 (cellulase G) family.

It is found in the secreted. The catalysed reaction is Endohydrolysis of (1-&gt;4)-beta-D-xylosidic linkages in xylans.. It participates in glycan degradation; xylan degradation. In terms of biological role, endo-1,4-beta-xylanase involved in the hydrolysis of xylan, a major structural heterogeneous polysaccharide found in plant biomass representing the second most abundant polysaccharide in the biosphere, after cellulose. The protein is Endo-1,4-beta-xylanase S20 (xynS20) of Neocallimastix patriciarum (Rumen fungus).